Reading from the N-terminus, the 498-residue chain is Isocitrate dehydrogenase [NADP], mitochondrial (498 aa).

NADP(+)-binding positions include 164–166 (TIT) and Arg-171. Position 166 (Thr-166) interacts with substrate. Substrate is bound by residues 183-189 (SPNGTIR), Arg-198, and Arg-221. Mn(2+) is bound at residue Asp-339. Lys-347 provides a ligand contact to NADP(+). Asp-362 contacts Mn(2+). NADP(+)-binding positions include 397–402 (GTVTRH) and Asn-415.

It belongs to the isocitrate and isopropylmalate dehydrogenases family. Mg(2+) serves as cofactor. Mn(2+) is required as a cofactor.

The protein localises to the mitochondrion. It carries out the reaction D-threo-isocitrate + NADP(+) = 2-oxoglutarate + CO2 + NADPH. This is Isocitrate dehydrogenase [NADP], mitochondrial (icdA) from Aspergillus niger.